The following is a 98-amino-acid chain: uncharacterized protein (98 aa).

Over residues 19 to 31 the composition is skewed to basic residues; that stretch reads RRMSKRSKNKAKK. Positions 19 to 47 are disordered; it reads RRMSKRSKNKAKKERVPVEDRPPTPMPTS.

It belongs to the lymphocryptovirus BNLF2B family.

This is an uncharacterized protein from Epstein-Barr virus (strain AG876) (HHV-4).